Consider the following 878-residue polypeptide: Alanine--tRNA ligase (878 aa).

The Zn(2+) site is built by His568, His572, Cys670, and His674.

Belongs to the class-II aminoacyl-tRNA synthetase family. Zn(2+) serves as cofactor.

Its subcellular location is the cytoplasm. The enzyme catalyses tRNA(Ala) + L-alanine + ATP = L-alanyl-tRNA(Ala) + AMP + diphosphate. Catalyzes the attachment of alanine to tRNA(Ala) in a two-step reaction: alanine is first activated by ATP to form Ala-AMP and then transferred to the acceptor end of tRNA(Ala). Also edits incorrectly charged Ser-tRNA(Ala) and Gly-tRNA(Ala) via its editing domain. The sequence is that of Alanine--tRNA ligase from Latilactobacillus sakei subsp. sakei (strain 23K) (Lactobacillus sakei subsp. sakei).